A 578-amino-acid polypeptide reads, in one-letter code: ATP-dependent RNA helicase has1 (578 aa).

A compositionally biased stretch (basic residues) spans 1 to 12 (MAKSELKRKKHQ). The interval 1-81 (MAKSELKRKK…ERVQKSVNLN (81 aa)) is disordered. Composition is skewed to acidic residues over residues 36 to 53 (LPQD…EDAD) and 60 to 71 (SESEELDNENED). Phosphoserine occurs at positions 60 and 62. Residues 89–117 (EKFSDLQLSENIQKAIKEMGFETMTEIQK) carry the Q motif motif. Positions 120–296 (IPPLLAGRDV…RISLKPGPLY (177 aa)) constitute a Helicase ATP-binding domain. 133-140 (AKTGSGKT) contacts ATP. Residues 243–246 (DEAD) carry the DEAD box motif. Residues 310-480 (GLEQGYVVVD…NVQSQLEKLV (171 aa)) enclose the Helicase C-terminal domain. Positions 322-338 (KRFLLLFSFLKRNLKKK) match the Bipartite nuclear localization signal motif. Over residues 543–561 (DKKERRAGYNKKNHVDVYS) the composition is skewed to basic and acidic residues. The disordered stretch occupies residues 543 to 578 (DKKERRAGYNKKNHVDVYSKQRSSAISQDKERGWSR).

It belongs to the DEAD box helicase family. DDX18/HAS1 subfamily. As to quaternary structure, associates in the nucleolus with the 60S and pre-60S ribosomal subunits.

It is found in the nucleus. The protein localises to the nucleolus. It carries out the reaction ATP + H2O = ADP + phosphate + H(+). In terms of biological role, ATP-dependent RNA helicase involved in 40S ribosomal subunit biogenesis. Required for the processing and cleavage of 35S pre-rRNA at sites A0, A1, and A2, leading to mature 18S rRNA. The sequence is that of ATP-dependent RNA helicase has1 (has1) from Schizosaccharomyces pombe (strain 972 / ATCC 24843) (Fission yeast).